Here is a 511-residue protein sequence, read N- to C-terminus: MKKADILVLDFGSQYTQLIARRLREQGVYAEILPFNVSLADIKAKEPKGIILSGGPASVYATDAYFCDKGIFDLNLPVLGICYGMQLMAHHYKATVAPAGHKEYGKANIEIKKDNALFKNLPKKQTVWMSHSDKVENLPQGFEVLATSENSPFCVFGNEDKKFFALQFHPEVQHSEFGKNILKNFAKYACNCESIWNMGSFAKTQAEKIREEVGNDKVLCAVSGGVDSSVVAALLASAIKEQIIVVFVDNGLLRSGEKEQVEFMFKNTLGIDLISIDASEIFLSRLVNVTDPEQKRKIIGNTFIEVFEEEAKKHKDVKYLAQGTLYTDIIESSVVGASKTIKSHHNVGGLPEKMNLKLIEPLKEIFKDEVRALGLELGLSKEVVYRHPFPGPGLAIRIMGEVNRASLELLRKADVILLEELKSTGWYDKTWQAFCVLLNVKSVGVMGDNRTYDNAVCIRVVDASDGMTATFSHLPYEILENISRRIINEVEGINRVVYDISSKPPATIEWE.

Residues 5 to 195 (DILVLDFGSQ…AKYACNCESI (191 aa)) form the Glutamine amidotransferase type-1 domain. Residue C82 is the Nucleophile of the active site. Active-site residues include H169 and E171. Positions 196-386 (WNMGSFAKTQ…LGLSKEVVYR (191 aa)) constitute a GMPS ATP-PPase domain. Residue 223 to 229 (SGGVDSS) participates in ATP binding.

Homodimer.

It carries out the reaction XMP + L-glutamine + ATP + H2O = GMP + L-glutamate + AMP + diphosphate + 2 H(+). The protein operates within purine metabolism; GMP biosynthesis; GMP from XMP (L-Gln route): step 1/1. Its function is as follows. Catalyzes the synthesis of GMP from XMP. The polypeptide is GMP synthase [glutamine-hydrolyzing] (guaA) (Campylobacter jejuni subsp. jejuni serotype O:2 (strain ATCC 700819 / NCTC 11168)).